Reading from the N-terminus, the 242-residue chain is Prosalusin (242 aa).

A signal peptide spans 1–26 (MAAATRSCRPWGSLLGLIWLVSAAAA). Positions 27–189 (SWDLSSLRCN…SSWVVYGTNY (163 aa)) are excised as a propeptide. Residue 93 to 100 (GWTGTGKS) participates in ATP binding. The N-linked (GlcNAc...) asparagine glycan is linked to asparagine 149.

The protein belongs to the ClpA/ClpB family. Torsin subfamily.

It is found in the secreted. Salusin may be a endocrine and/or paracrine factor able to increase intracellular calcium concentrations and induce cell mitogenesis. Salusin may also be a potent hypotensive peptide. The sequence is that of Prosalusin (TOR2A) from Bos taurus (Bovine).